Consider the following 54-residue polypeptide: Large ribosomal subunit protein bL33 (54 aa).

This sequence belongs to the bacterial ribosomal protein bL33 family.

The sequence is that of Large ribosomal subunit protein bL33 from Frankia alni (strain DSM 45986 / CECT 9034 / ACN14a).